We begin with the raw amino-acid sequence, 561 residues long: 7-keto 8-aminopelargonic acid transporter (561 aa).

The Cytoplasmic portion of the chain corresponds to 1 to 49; sequence MNRVGAVFLFVYERNFFLSIVPDRHRTEIRMSSSERSEVKFDKHFNWWS. A helical membrane pass occupies residues 50-70; sequence LLGIAFSLSCSWVGISASMAV. The Extracellular segment spans residues 71-77; it reads GIASGGP. Residues 78-98 traverse the membrane as a helical segment; it reads LLIIYGLIIAAFFSLMCGISL. The Cytoplasmic portion of the chain corresponds to 99 to 160; sequence GDFAAILPNS…NVEVSSKFQK (62 aa). Residues 161–181 traverse the membrane as a helical segment; that stretch reads VSSMVVGLLNYFGAIFTTASI. Over 182–204 the chain is Extracellular; that stretch reads CSSLSMSCIGIHKLLHPDYELKH. Residues 205-225 form a helical membrane-spanning segment; sequence WHVFVGYECINAVLTLFNIYS. The Cytoplasmic segment spans residues 226–230; it reads TPLPY. A helical membrane pass occupies residues 231–251; that stretch reads ISQFGLYTSLLSFAMTFIICI. Residues 252–281 lie on the Extracellular side of the membrane; sequence VSRSDNTVDPWPKASNIFGSFDNQTGWNSS. A helical transmembrane segment spans residues 282-302; it reads GMAFVVGLVNPIWAFVGIDSA. Residues 303 to 321 are Cytoplasmic-facing; sequence THMIDEVGYSKSRFLVPKV. The chain crosses the membrane as a helical span at residues 322-342; sequence IITTIIVGFVTSFIYCVGLFF. Residues 343–369 are Extracellular-facing; sequence CITDQTAVVESILPIVEIFYQATGNRN. The helical transmembrane segment at 370–390 threads the bilayer; the sequence is LSVFLQCMCITTGFVSGIASG. At 391-439 the chain is on the cytoplasmic side; the sequence is TWQSRILQSFGKSYAPFYKEGSLGNKSLKKLAVLTPGFKSPLYAHFLSQ. Residues 440-460 traverse the membrane as a helical segment; sequence ICVTIIGCIFMGSSTAFNAII. Residue T461 is a topological domain, extracellular. The chain crosses the membrane as a helical span at residues 462–482; the sequence is ACITLLLMSYAVPSFIFLFVI. Residues 483–507 lie on the Cytoplasmic side of the membrane; that stretch reads KKEKFIHRIESDVNCVSRPNRRRMS. Residues 508–528 traverse the membrane as a helical segment; that stretch reads MIPHIICILWTLFCLVFLSFP. At 529 to 540 the chain is on the extracellular side; sequence YTLPVTAGNMNY. Residues 541-560 traverse the membrane as a helical segment; it reads TSVVYAVVFCIISIVVFPTC. A topological domain (cytoplasmic) is located at residue I561.

The protein belongs to the amino acid-polyamine-organocation (APC) superfamily.

The protein localises to the membrane. Transport into the cell of 7-keto 8-aminopelargonic acid. This Saccharomyces cerevisiae (strain ATCC 204508 / S288c) (Baker's yeast) protein is 7-keto 8-aminopelargonic acid transporter (BIO5).